Here is a 491-residue protein sequence, read N- to C-terminus: Glutamate--tRNA ligase (491 aa).

A 'HIGH' region motif is present at residues 13 to 23 (PSPTGFLHIGN). Zn(2+)-binding residues include Cys110, Cys112, Cys137, and His139. The 'KMSKS' region signature appears at 254-258 (KLSKR). Lys257 is an ATP binding site.

Belongs to the class-I aminoacyl-tRNA synthetase family. Glutamate--tRNA ligase type 1 subfamily. Monomer. The cofactor is Zn(2+).

The protein localises to the cytoplasm. It catalyses the reaction tRNA(Glu) + L-glutamate + ATP = L-glutamyl-tRNA(Glu) + AMP + diphosphate. In terms of biological role, catalyzes the attachment of glutamate to tRNA(Glu) in a two-step reaction: glutamate is first activated by ATP to form Glu-AMP and then transferred to the acceptor end of tRNA(Glu). The protein is Glutamate--tRNA ligase of Listeria innocua serovar 6a (strain ATCC BAA-680 / CLIP 11262).